Reading from the N-terminus, the 607-residue chain is UvrABC system protein C (607 aa).

Residues 15 to 93 (SEPGVYCMLD…IKKYQPRYNI (79 aa)) enclose the GIY-YIG domain. One can recognise a UVR domain in the interval 202–237 (HEVIADLIKKMEAASQQLNFELAAKVRDQIMLLRKM).

It belongs to the UvrC family. In terms of assembly, interacts with UvrB in an incision complex.

The protein resides in the cytoplasm. Functionally, the UvrABC repair system catalyzes the recognition and processing of DNA lesions. UvrC both incises the 5' and 3' sides of the lesion. The N-terminal half is responsible for the 3' incision and the C-terminal half is responsible for the 5' incision. The chain is UvrABC system protein C from Pseudoalteromonas translucida (strain TAC 125).